The primary structure comprises 431 residues: MHRFRKNTCLISDYFHSTGGNYNLSQPCVNIGMVGHVDHGKTTLVRALSGVWTDTHSEEVKRGISIRLGYADSPFMKCPKCPEPQCYTVEKTCPNCGEKTEEHRTVSFVDAPGHETLMATMLSGAAIMDGAVLVIAANEDCPQPQTKEHLMALDIIGIKNIVIVQNKIDLVSREKIIENYHQIKEFVKGTVAENAPVIPISAQQNINIDILIDALETQIPTPSHKVDKPASMLIARSFDINKPGASIEEIRGGVIGGTLTEGVLHPGDELEIRPGIKVTTEGSTRWIPILTTVSSIYAGATKVDEATPGGLLAVGTYLDPTLTKGDSLTGQMAGVPGTLPETRHQFVMELHLLDRVVGVTREEKINEIKTSEPLMLNIGTATTVGVVTSARKNEAQVALKRPISAAIGAMVAISRRVDSRWRLIGVGVIKS.

Residues 26–223 (QPCVNIGMVG…ALETQIPTPS (198 aa)) enclose the tr-type G domain. Positions 35-42 (GHVDHGKT) are G1. Positions 38, 42, 63, and 65 each coordinate Mg(2+). 38 to 43 (DHGKTT) provides a ligand contact to GTP. The tract at residues 63 to 67 (GISIR) is G2. Zn(2+)-binding residues include Cys78, Cys81, Cys93, and Cys96. A G3 region spans residues 110–113 (DAPG). Residues 166–169 (NKID) and 201–203 (SAQ) contribute to the GTP site. A G4 region spans residues 166-169 (NKID). Residues 201-203 (SAQ) form a G5 region.

Belongs to the TRAFAC class translation factor GTPase superfamily. Classic translation factor GTPase family. EIF2G subfamily. As to quaternary structure, heterotrimer composed of an alpha, a beta and a gamma chain. Mg(2+) serves as cofactor.

It catalyses the reaction GTP + H2O = GDP + phosphate + H(+). In terms of biological role, eIF-2 functions in the early steps of protein synthesis by forming a ternary complex with GTP and initiator tRNA. This is Translation initiation factor 2 subunit gamma from Methanosarcina mazei (strain ATCC BAA-159 / DSM 3647 / Goe1 / Go1 / JCM 11833 / OCM 88) (Methanosarcina frisia).